The primary structure comprises 168 residues: MAENRRNDREQSEFEERVVSINRVTKVVKGGRRLRFAALVVVGDRNGRVGFGTGKAQEVPEAIRKAIEAAKKNLITVPMVGTTLPHEALGVFGGGKILLKPAVEGAGVAAGGAVRAVLELAGVADVTSKSLGSNTPINVVRATVDGLNQLKRAEEVAALRGKSVSDFA.

An S5 DRBM domain is found at 14-77; that stretch reads FEERVVSINR…EAAKKNLITV (64 aa).

The protein belongs to the universal ribosomal protein uS5 family. As to quaternary structure, part of the 30S ribosomal subunit. Contacts proteins S4 and S8.

In terms of biological role, with S4 and S12 plays an important role in translational accuracy. Its function is as follows. Located at the back of the 30S subunit body where it stabilizes the conformation of the head with respect to the body. The polypeptide is Small ribosomal subunit protein uS5 (Lactococcus lactis subsp. lactis (strain IL1403) (Streptococcus lactis)).